We begin with the raw amino-acid sequence, 466 residues long: 3-isopropylmalate dehydratase large subunit (466 aa).

Cys-347, Cys-408, and Cys-411 together coordinate [4Fe-4S] cluster.

This sequence belongs to the aconitase/IPM isomerase family. LeuC type 1 subfamily. Heterodimer of LeuC and LeuD. [4Fe-4S] cluster is required as a cofactor.

It catalyses the reaction (2R,3S)-3-isopropylmalate = (2S)-2-isopropylmalate. The protein operates within amino-acid biosynthesis; L-leucine biosynthesis; L-leucine from 3-methyl-2-oxobutanoate: step 2/4. Functionally, catalyzes the isomerization between 2-isopropylmalate and 3-isopropylmalate, via the formation of 2-isopropylmaleate. This is 3-isopropylmalate dehydratase large subunit from Herminiimonas arsenicoxydans.